The primary structure comprises 682 residues: Zinc finger protein 16 (682 aa).

The segment covering 1 to 10 has biased composition (basic and acidic residues); the sequence is MPSLRTRREE. The disordered stretch occupies residues 1–38; sequence MPSLRTRREEAEMELSAPGPSPWTPAAQARVSDAPAVT. The tract at residues 62 to 210 is necessary for transcription activation; that stretch reads YQQPDCDTRT…GVPTAESPLI (149 aa). The C2H2-type 1; degenerate zinc-finger motif lies at 209–231; it reads LICNECGKTFRGNPDLIQRQIVH. The segment at 237 to 259 adopts a C2H2-type 2; degenerate zinc-finger fold; sequence FMCDDCGKTFSQNSVLKNRHRSH. K253 is covalently cross-linked (Glycyl lysine isopeptide (Lys-Gly) (interchain with G-Cter in SUMO2)). 8 consecutive C2H2-type zinc fingers follow at residues 265–287, 293–315, 321–343, 349–371, 377–399, 405–427, 433–455, and 461–483; these read YQCS…QSHH, YTCT…QKSH, YECN…QRIH, YVCS…HRTH, FECG…QRVH, YECN…HRVH, YKCS…RRIH, and HVCN…QIIH. 2 required for nuclear localization regions span residues 268 to 393 and 341 to 373; these read SECG…AHLR and RIHS…THTG. The tract at residues 473–503 is required for nuclear localization; sequence SSVLRKHQIIHTGEKPYRCSVCGKAFSHSSA. N6-acetyllysine is present on K487. C2H2-type zinc fingers lie at residues 489–511, 517–539, 545–567, 573–595, 601–623, 629–651, and 657–679; these read YRCS…QGVH, YACH…QRVH, YECT…QRIH, HECN…QKVH, YTCV…QIIH, YKCS…QRIH, and YDCA…QLIH.

The protein belongs to the krueppel C2H2-type zinc-finger protein family. Interacts with INCA1; the interaction inhibits INCA1 activity and induces the cell cycle process.

The protein resides in the nucleus. Acts as a transcriptional activator. Promotes cell proliferation by facilitating the cell cycle phase transition from the S to G2/M phase. Involved in both the hemin- and phorbol myristate acetate (PMA)-induced erythroid and megakaryocytic differentiation, respectively. Also plays a role as an inhibitor of cell apoptosis. The polypeptide is Zinc finger protein 16 (ZNF16) (Pan troglodytes (Chimpanzee)).